A 356-amino-acid polypeptide reads, in one-letter code: Protein RecA (356 aa).

68–75 (GPESSGKT) contacts ATP.

Belongs to the RecA family.

The protein localises to the cytoplasm. Functionally, can catalyze the hydrolysis of ATP in the presence of single-stranded DNA, the ATP-dependent uptake of single-stranded DNA by duplex DNA, and the ATP-dependent hybridization of homologous single-stranded DNAs. It interacts with LexA causing its activation and leading to its autocatalytic cleavage. The sequence is that of Protein RecA from Clostridium botulinum (strain Eklund 17B / Type B).